We begin with the raw amino-acid sequence, 118 residues long: Non-specific lipid-transfer protein 3 (118 aa).

Positions 1-25 are cleaved as a signal peptide; sequence MARAAATQLVLVAMVAAMLLVATDA. 4 disulfide bridges follow: cysteine 29-cysteine 77, cysteine 39-cysteine 54, cysteine 55-cysteine 100, and cysteine 75-cysteine 114.

It belongs to the plant LTP family.

Functionally, plant non-specific lipid-transfer proteins transfer phospholipids as well as galactolipids across membranes. May play a role in wax or cutin deposition in the cell walls of expanding epidermal cells and certain secretory tissues. This Hordeum vulgare (Barley) protein is Non-specific lipid-transfer protein 3 (LTP3).